The primary structure comprises 208 residues: FMN-dependent NADH:quinone oxidoreductase (208 aa).

FMN is bound by residues 17–19 (SNS), 99–102 (MWNL), and 143–146 (SRGG).

Belongs to the azoreductase type 1 family. Homodimer. The cofactor is FMN.

It carries out the reaction 2 a quinone + NADH + H(+) = 2 a 1,4-benzosemiquinone + NAD(+). The catalysed reaction is N,N-dimethyl-1,4-phenylenediamine + anthranilate + 2 NAD(+) = 2-(4-dimethylaminophenyl)diazenylbenzoate + 2 NADH + 2 H(+). Functionally, quinone reductase that provides resistance to thiol-specific stress caused by electrophilic quinones. In terms of biological role, also exhibits azoreductase activity. Catalyzes the reductive cleavage of the azo bond in aromatic azo compounds to the corresponding amines. The polypeptide is FMN-dependent NADH:quinone oxidoreductase (Staphylococcus carnosus (strain TM300)).